Consider the following 348-residue polypeptide: Phosphatidylinositol 3,4,5-trisphosphate 3-phosphatase ptn1 (348 aa).

Residues 18–189 enclose the Phosphatase tensin-type domain; it reads EKVNRSFAYL…YYIEILKQFP (172 aa). Cys-129 (phosphocysteine intermediate) is an active-site residue.

Its subcellular location is the cytoplasmic vesicle. The catalysed reaction is a 1,2-diacyl-sn-glycero-3-phospho-(1D-myo-inositol-3,4,5-trisphosphate) + H2O = a 1,2-diacyl-sn-glycero-3-phospho-(1D-myo-inositol-4,5-bisphosphate) + phosphate. The enzyme catalyses 1,2-dioctanoyl-sn-glycero-3-phospho-(1D-myo-inositol-3,4,5-trisphosphate) + H2O = 1,2-dioctanoyl-sn-glycero-3-phospho-(1D-myo-inositol-4,5-bisphosphate) + phosphate. It carries out the reaction 1,2-dihexadecanoyl-sn-glycero-3-phospho-(1D-myo-inositol-3,4,5-trisphosphate) + H2O = 1,2-dihexadecanoyl-sn-glycero-3-phospho-(1D-myo-inositol-4,5-bisphosphate) + phosphate. In terms of biological role, acts as a phosphoinositide 3-phosphatase and regulates PtdIns(3,4,5)P3 levels. This Schizosaccharomyces pombe (strain 972 / ATCC 24843) (Fission yeast) protein is Phosphatidylinositol 3,4,5-trisphosphate 3-phosphatase ptn1 (ptn1).